Here is a 100-residue protein sequence, read N- to C-terminus: Urease subunit gamma (100 aa).

Belongs to the urease gamma subunit family. As to quaternary structure, heterotrimer of UreA (gamma), UreB (beta) and UreC (alpha) subunits. Three heterotrimers associate to form the active enzyme.

It localises to the cytoplasm. The enzyme catalyses urea + 2 H2O + H(+) = hydrogencarbonate + 2 NH4(+). It functions in the pathway nitrogen metabolism; urea degradation; CO(2) and NH(3) from urea (urease route): step 1/1. The chain is Urease subunit gamma from Marinobacter nauticus (strain ATCC 700491 / DSM 11845 / VT8) (Marinobacter aquaeolei).